The chain runs to 376 residues: UDP-4-amino-4,6-dideoxy-N-acetyl-beta-L-altrosamine transaminase (376 aa).

Substrate-binding positions include Tyr-4, 24 to 27 (EILT), Ala-54, and Ser-176. Position 181 is an N6-(pyridoxal phosphate)lysine (Lys-181). Residues Asn-226 and 311–314 (QVHY) each bind substrate.

It belongs to the DegT/DnrJ/EryC1 family.

It catalyses the reaction UDP-4-amino-4,6-dideoxy-N-acetyl-beta-L-altrosamine + 2-oxoglutarate = UDP-2-acetamido-2,6-dideoxy-beta-L-arabino-hex-4-ulose + L-glutamate. Functionally, catalyzes the second step in the biosynthesis of pseudaminic acid, a sialic-acid-like sugar that is used to modify flagellin. Uses UDP-2-acetamido-2,6-dideoxy-beta-L-arabino-4-hexulose as substrate producing UDP-4-amino-4,6-dideoxy-beta-L-AltNAc. The sequence is that of UDP-4-amino-4,6-dideoxy-N-acetyl-beta-L-altrosamine transaminase (pseC) from Campylobacter jejuni subsp. jejuni serotype O:23/36 (strain 81-176).